A 363-amino-acid polypeptide reads, in one-letter code: Phosphoserine aminotransferase (363 aa).

Arg42 provides a ligand contact to L-glutamate. Residues 76–77, Trp102, Thr156, Asp175, and Gln198 each bind pyridoxal 5'-phosphate; that span reads GR. The residue at position 199 (Lys199) is an N6-(pyridoxal phosphate)lysine. Pyridoxal 5'-phosphate is bound at residue 240–241; it reads NT.

The protein belongs to the class-V pyridoxal-phosphate-dependent aminotransferase family. SerC subfamily. As to quaternary structure, homodimer. It depends on pyridoxal 5'-phosphate as a cofactor.

The protein resides in the cytoplasm. The enzyme catalyses O-phospho-L-serine + 2-oxoglutarate = 3-phosphooxypyruvate + L-glutamate. It catalyses the reaction 4-(phosphooxy)-L-threonine + 2-oxoglutarate = (R)-3-hydroxy-2-oxo-4-phosphooxybutanoate + L-glutamate. It participates in amino-acid biosynthesis; L-serine biosynthesis; L-serine from 3-phospho-D-glycerate: step 2/3. The protein operates within cofactor biosynthesis; pyridoxine 5'-phosphate biosynthesis; pyridoxine 5'-phosphate from D-erythrose 4-phosphate: step 3/5. Its function is as follows. Catalyzes the reversible conversion of 3-phosphohydroxypyruvate to phosphoserine and of 3-hydroxy-2-oxo-4-phosphonooxybutanoate to phosphohydroxythreonine. In Shewanella denitrificans (strain OS217 / ATCC BAA-1090 / DSM 15013), this protein is Phosphoserine aminotransferase.